The chain runs to 506 residues: CTL-like protein DDB_G0269978 (506 aa).

Residues Asn15 and Asn41 are each glycosylated (N-linked (GlcNAc...) asparagine). The next 12 helical transmembrane spans lie at 91–111, 126–146, 161–181, 182–202, 226–246, 256–276, 279–299, 323–343, 345–367, 371–393, 416–436, and 447–467; these read LLYSVLFAIQMVLFITMTVIA, LQGLLIIAISIPLILAFFLIW, SFFSLMITGILFIGLLIGNGW, YSWAIVFGITLISLIFFYFAF, TLLVSFVCLIISCVYYNIWLF, SYWTAWSYMKFMFLVFNLYWT, VITYTCYSVVSGLVASWYFFA, FGSIAFGSLLVCLVQMVQFIC, GFARVPGLTSLFCNCLQFIALIF, LYTFNIYTFSMVSIYGQSFCNSS, ITMLSVSLSMFLIIGFIVTMI, and WLYVQLVMFLFILYKPFDIIF.

It belongs to the CTL (choline transporter-like) family.

The protein resides in the membrane. This is CTL-like protein DDB_G0269978 from Dictyostelium discoideum (Social amoeba).